Consider the following 188-residue polypeptide: Adenine phosphoribosyltransferase (188 aa).

Belongs to the purine/pyrimidine phosphoribosyltransferase family. Homodimer.

The protein localises to the cytoplasm. It carries out the reaction AMP + diphosphate = 5-phospho-alpha-D-ribose 1-diphosphate + adenine. It participates in purine metabolism; AMP biosynthesis via salvage pathway; AMP from adenine: step 1/1. Its function is as follows. Catalyzes a salvage reaction resulting in the formation of AMP, that is energically less costly than de novo synthesis. This chain is Adenine phosphoribosyltransferase, found in Paraburkholderia phymatum (strain DSM 17167 / CIP 108236 / LMG 21445 / STM815) (Burkholderia phymatum).